A 311-amino-acid chain; its full sequence is Alpha/beta hydrolase domain-containing protein 17C (311 aa).

The segment at Glu-48–Ala-67 is disordered. Active-site charge relay system residues include Ser-193, Asp-258, and His-287.

It belongs to the AB hydrolase superfamily. ABHD17 family. Post-translationally, palmitoylated on cysteine residues located in a cysteine cluster at the N-terminus which promotes membrane localization.

Its subcellular location is the recycling endosome membrane. The protein localises to the cell projection. The protein resides in the dendritic spine. It localises to the postsynaptic density membrane. It carries out the reaction S-hexadecanoyl-L-cysteinyl-[protein] + H2O = L-cysteinyl-[protein] + hexadecanoate + H(+). Its function is as follows. Hydrolyzes fatty acids from S-acylated cysteine residues in proteins. Has depalmitoylating activity towards NRAS. In Xenopus laevis (African clawed frog), this protein is Alpha/beta hydrolase domain-containing protein 17C.